The sequence spans 218 residues: Adenylate kinase (218 aa).

10–15 (GAGKGT) serves as a coordination point for ATP. The tract at residues 30-59 (STGDMLRAAVKAGTPLGLEAKKVMDAGGLV) is NMP. Residues Thr-31, Arg-36, 57–59 (GLV), 85–88 (GFPR), and Gln-92 each bind AMP. An LID region spans residues 122-159 (GRRVHPASGRVYHTKYNPPKVEGKDDETGDELVQRDDD). ATP is bound by residues Arg-123 and 132–133 (VY). The tract at residues 139-160 (PPKVEGKDDETGDELVQRDDDQ) is disordered. 2 residues coordinate AMP: Arg-156 and Arg-167. Position 203 (Gly-203) interacts with ATP.

It belongs to the adenylate kinase family. As to quaternary structure, monomer.

It is found in the cytoplasm. It catalyses the reaction AMP + ATP = 2 ADP. It functions in the pathway purine metabolism; AMP biosynthesis via salvage pathway; AMP from ADP: step 1/1. Catalyzes the reversible transfer of the terminal phosphate group between ATP and AMP. Plays an important role in cellular energy homeostasis and in adenine nucleotide metabolism. In Alcanivorax borkumensis (strain ATCC 700651 / DSM 11573 / NCIMB 13689 / SK2), this protein is Adenylate kinase.